Reading from the N-terminus, the 432-residue chain is Enolase (432 aa).

Gln-163 is a (2R)-2-phosphoglycerate binding site. Glu-205 (proton donor) is an active-site residue. 3 residues coordinate Mg(2+): Asp-242, Glu-289, and Asp-316. Residues Lys-341, Arg-370, Ser-371, and Lys-392 each coordinate (2R)-2-phosphoglycerate. Residue Lys-341 is the Proton acceptor of the active site.

It belongs to the enolase family. Mg(2+) serves as cofactor. Probably phosphorylated.

The protein resides in the cytoplasm. It is found in the secreted. The protein localises to the cell surface. It catalyses the reaction (2R)-2-phosphoglycerate = phosphoenolpyruvate + H2O. Its pathway is carbohydrate degradation; glycolysis; pyruvate from D-glyceraldehyde 3-phosphate: step 4/5. Functionally, catalyzes the reversible conversion of 2-phosphoglycerate (2-PG) into phosphoenolpyruvate (PEP). It is essential for the degradation of carbohydrates via glycolysis. 'Moonlights' as a plasminogen receptor. Binds plasminogen and human salivary mucin MG2 when expressed on the bacterial cell surface, potentially allowing the bacterium to acquire surface-associated proteolytic activity that may help the dissemination through oral tissues and entrance into the blood stream. In Streptococcus mutans serotype c (strain ATCC 700610 / UA159), this protein is Enolase.